A 146-amino-acid chain; its full sequence is MTILHQSEDQIEVASEVAAASEAASEVASEAVSPEAASVAPEVDLVVQEVVTVAIPEVATVATPEADMVAPEVVTIVLEVVTIVQEVVIPEVAMVVQEMITVLQEVATVVQEVVMMVQEAIMVLQEMHTEPEMLHVKDHQPGKPFI.

This is an uncharacterized protein from Saccharomyces cerevisiae (strain ATCC 204508 / S288c) (Baker's yeast).